The primary structure comprises 88 residues: Small ribosomal subunit protein uS15 (88 aa).

This sequence belongs to the universal ribosomal protein uS15 family. As to quaternary structure, part of the 30S ribosomal subunit. Forms a bridge to the 50S subunit in the 70S ribosome, contacting the 23S rRNA.

In terms of biological role, one of the primary rRNA binding proteins, it binds directly to 16S rRNA where it helps nucleate assembly of the platform of the 30S subunit by binding and bridging several RNA helices of the 16S rRNA. Forms an intersubunit bridge (bridge B4) with the 23S rRNA of the 50S subunit in the ribosome. The chain is Small ribosomal subunit protein uS15 from Flavobacterium johnsoniae (strain ATCC 17061 / DSM 2064 / JCM 8514 / BCRC 14874 / CCUG 350202 / NBRC 14942 / NCIMB 11054 / UW101) (Cytophaga johnsonae).